A 200-amino-acid polypeptide reads, in one-letter code: LIM domain-containing protein WLIM2a (200 aa).

LIM zinc-binding domains lie at 8–68 (QKCR…LFKE) and 107–167 (DKCA…LFKE).

Interacts with F-actin. In terms of tissue distribution, expressed in roots, leaves, stems, flowers and siliques. Barely detected in pollen.

The protein localises to the cytoplasm. The protein resides in the cytoskeleton. Binds to actin filaments and promotes cross-linking into thick bundles. Has an actin-stabilizing activity. The actin regulatory activities are not regulated by pH and [Ca(2+)]. The protein is LIM domain-containing protein WLIM2a of Arabidopsis thaliana (Mouse-ear cress).